Reading from the N-terminus, the 254-residue chain is Ribonuclease HII (254 aa).

The region spanning 70–254 is the RNase H type-2 domain; that stretch reads TCIAGIDEAG…SFAPVKSVIS (185 aa). 3 residues coordinate a divalent metal cation: Asp-76, Glu-77, and Asp-168.

Belongs to the RNase HII family. Mn(2+) is required as a cofactor. Requires Mg(2+) as cofactor.

It localises to the cytoplasm. It carries out the reaction Endonucleolytic cleavage to 5'-phosphomonoester.. Endonuclease that specifically degrades the RNA of RNA-DNA hybrids. The sequence is that of Ribonuclease HII from Bacillus pumilus (strain SAFR-032).